The primary structure comprises 391 residues: Secreted aspartic protease 1 (391 aa).

A signal peptide spans 1–18; sequence MFLKNIFIALAIALLVDA. Positions 19 to 50 are cleaved as a propeptide — activation peptide; the sequence is SPAKRSPGFVTLDFDVIKTPVNATGQEGKVKR. Asparagine 40 carries an N-linked (GlcNAc...) asparagine glycan. In terms of domain architecture, Peptidase A1 spans 64-377; the sequence is YAADITIGSN…DLDDDKISLA (314 aa). Aspartate 82 is an active-site residue. 82–84 is a binding site for pepstatin A; it reads DTG. A disulfide bridge connects residues cysteine 97 and cysteine 109. 135 to 136 lines the pepstatin A pocket; it reads GD. Positions 241 and 263 each coordinate Zn(2+). Residue aspartate 267 is part of the active site. 267–271 contributes to the pepstatin A binding site; sequence DSGTT. A disulfide bridge connects residues cysteine 305 and cysteine 343.

This sequence belongs to the peptidase A1 family. Monomer.

It is found in the secreted. It carries out the reaction Preferential cleavage at the carboxyl of hydrophobic amino acids, but fails to cleave 15-Leu-|-Tyr-16, 16-Tyr-|-Leu-17 and 24-Phe-|-Phe-25 of insulin B chain. Activates trypsinogen, and degrades keratin.. With respect to regulation, inhibited by pepstatin A analogs and squash aspartic peptidase inhibitor (SQAPI). In terms of biological role, secreted aspartic peptidases (SAPs) are a group of ten acidic hydrolases considered as key virulence factors. These enzymes supply the fungus with nutrient amino acids as well as are able to degrade the selected host's proteins involved in the immune defense. Induces host inflammatory cytokine production in a proteolytic activity-independent way. Plays a role in tissue damage during superficial infection. Moreover, acts toward human hemoglobin though limited proteolysis to generate a variety of antimicrobial hemocidins, enabling to compete with the other microorganisms of the same physiological niche using the microbicidal peptides generated from the host protein. Plays a key role in defense against host by cleaving histatin-5 (Hst 5), a peptide from human saliva that carries out fungicidal activity. The cleavage rate decreases in an order of SAP2 &gt; SAP9 &gt; SAP3 &gt; SAP7 &gt; SAP4 &gt; SAP1 &gt; SAP8. The first cleavage occurs between residues 'Lys-17' and 'His-18' of Hst 5, giving DSHAKRHHGYKRKFHEK and HHSHRGY peptides. Further fragmentation by SAP1 results in AKRHHGYKRKFHEK and AKRHHGY products. The polypeptide is Secreted aspartic protease 1 (Candida albicans (strain SC5314 / ATCC MYA-2876) (Yeast)).